The following is a 132-amino-acid chain: L-ectoine synthase (132 aa).

It belongs to the ectoine synthase family.

It catalyses the reaction (2S)-4-acetamido-2-aminobutanoate = L-ectoine + H2O. It functions in the pathway amine and polyamine biosynthesis; ectoine biosynthesis; L-ectoine from L-aspartate 4-semialdehyde: step 3/3. Its function is as follows. Catalyzes the circularization of gamma-N-acetyl-alpha,gamma-diaminobutyric acid (ADABA) to ectoine (1,4,5,6-tetrahydro-2-methyl-4-pyrimidine carboxylic acid), which is an excellent osmoprotectant. This chain is L-ectoine synthase, found in Teredinibacter turnerae (strain ATCC 39867 / T7901).